The primary structure comprises 479 residues: UDP-glycosyltransferase 85A8 (479 aa).

UDP-alpha-D-glucose-binding positions include S302, 358 to 359 (WC), 376 to 384 (HSGWNSTIE), and 398 to 401 (FAEQ).

The protein belongs to the UDP-glycosyltransferase family.

In terms of biological role, may glycosylate diterpenes or flavonols in leaves. This is UDP-glycosyltransferase 85A8 from Stevia rebaudiana (Stevia).